The following is a 412-amino-acid chain: Histidine--tRNA ligase (412 aa).

This sequence belongs to the class-II aminoacyl-tRNA synthetase family. Homodimer.

It is found in the cytoplasm. The enzyme catalyses tRNA(His) + L-histidine + ATP = L-histidyl-tRNA(His) + AMP + diphosphate + H(+). This chain is Histidine--tRNA ligase, found in Maridesulfovibrio salexigens (strain ATCC 14822 / DSM 2638 / NCIMB 8403 / VKM B-1763) (Desulfovibrio salexigens).